Reading from the N-terminus, the 1149-residue chain is Guanine nucleotide exchange factor DBS (1149 aa).

A CRAL-TRIO domain is found at 52 to 224 (MATASDEIMH…DLGGTLDYCH (173 aa)). The Spectrin repeat unit spans residues 355–454 (HFEQGFREVK…SEVTRRRDLL (100 aa)). Phosphoserine occurs at positions 457, 462, 471, and 480. Residues 503–528 (LETGAENKIQELNKIYKEYECILNQD) adopt a coiled-coil conformation. Positions 555–627 (KKLAAKQTRP…RTSSTGEEEE (73 aa)) are disordered. Positions 583–594 (PGSWRSSENSSS) are enriched in low complexity. Positions 607 to 616 (AKSEMSEPRQ) are enriched in basic and acidic residues. The residue at position 621 (Ser621) is a Phosphoserine. A Phosphothreonine modification is found at Thr622. Residues 632–812 (LRRHVMNELL…LGILKAVNDS (181 aa)) form the DH domain. The region spanning 830 to 946 (KLLMQGSFSV…WVNEIRKVLT (117 aa)) is the PH domain. The tract at residues 956 to 1033 (SQHRALEQSH…EAPEEDGGWS (78 aa)) is disordered. The segment covering 964-978 (SHSLPLPTPASTSPT) has biased composition (low complexity). Ser1033, Ser1034, Ser1041, and Ser1042 each carry phosphoserine. One can recognise an SH3 domain in the interval 1055–1116 (LVPGKYTVLM…PASSLATLLG (62 aa)).

The protein belongs to the MCF2 family. In terms of assembly, interacts with GTP-bound RAC1. Interacts with CDC42. Interacts with RHOA. Interacts with CCPG1, which results in specific inhibition of its exchange activity toward RHOA, but does not affect its activity on CDC42. Mainly phosphorylated on serine. As to expression, highest expression in the brain, where it is found in neurons and alpha-tanycytes (at protein level). Detected in brain, and at lower levels in the heart.

It is found in the cytoplasm. The protein resides in the cell membrane. Its function is as follows. Guanine nucleotide exchange factor that catalyzes guanine nucleotide exchange on RHOA and CDC42, and thereby contributes to the regulation of RHOA and CDC42 signaling pathways. Seems to lack activity with RAC1. Becomes activated and highly tumorigenic by truncation of the N-terminus. This Rattus norvegicus (Rat) protein is Guanine nucleotide exchange factor DBS (Mcf2l).